The following is a 777-amino-acid chain: Aminopeptidase P (777 aa).

A signal peptide spans 1–17 (MQLNFLLFVFIFLMVFH). His-551 is a substrate binding site. Mn(2+) is bound by residues Asp-570 and Asp-581. His-640 contributes to the substrate binding site. His-644 is a Mn(2+) binding site. His-653 contributes to the substrate binding site. Positions 676 and 690 each coordinate Mn(2+).

The protein belongs to the peptidase M24B family. As to quaternary structure, homodimer. The cofactor is Mn(2+). In terms of processing, the N-terminus may be proteolytically cleaved to generate a 73-kDa mature form.

Its subcellular location is the vacuole lumen. It is found in the cytoplasm. The enzyme catalyses Release of any N-terminal amino acid, including proline, that is linked to proline, even from a dipeptide or tripeptide.. Partially activated by Co(2+) and Mg(2+) has no effect. Inhibited by 1 mM Zn(2+), Ni(2+), or Cu(2+). Inhibited by apstatin, a non-hydrolysable peptide analog. Catalyzes the removal of a penultimate prolyl residue from the N-termini of peptides. In the food vacuole, involved in the final step of host hemoglobin catabolism, by cleaving hemoglobin-derived oligopeptides. In the cytoplasm, may be involved in the last steps of the turnover of ubiquitinated proteins. In Plasmodium falciparum (isolate 3D7), this protein is Aminopeptidase P.